The sequence spans 311 residues: MTNKVIQRNIHISHRKASLVIDLVRNKPVHEAIRILSNTPKKFAPIVLKLLNSAISNVQHNSKDMDPSKLYIYKIVANQGPTMKRTLPRAKGSADQLFKRTTHLEIVLSDDVNEREKELAAIKAKKSKKPLAVEPIAKVETKKVAKPSKVEIKPVEKDENVDPELLKREQQVLKVVEKTASQKEEETTETIMISTSPKNAQVLFDDLEKNVIFYKTTPINKVLRVLVYVTSPTKKVVGEFDLESVEIGAISSIWRKYSKQSVISKKEYDAYYEGKDKAHALVSKKAYKYRNPKDLSEYNMTKGPSGFQYLK.

This sequence belongs to the universal ribosomal protein uL22 family. As to quaternary structure, part of the 50S ribosomal subunit.

In terms of biological role, this protein binds specifically to 23S rRNA; its binding is stimulated by other ribosomal proteins, e.g. L4, L17, and L20. It is important during the early stages of 50S assembly. It makes multiple contacts with different domains of the 23S rRNA in the assembled 50S subunit and ribosome. Its function is as follows. The globular domain of the protein is located near the polypeptide exit tunnel on the outside of the subunit, while an extended beta-hairpin is found that lines the wall of the exit tunnel in the center of the 70S ribosome. The chain is Large ribosomal subunit protein uL22 (rplV) from Ureaplasma parvum serovar 3 (strain ATCC 27815 / 27 / NCTC 11736).